We begin with the raw amino-acid sequence, 362 residues long: Tryptophan 2,3-dioxygenase (362 aa).

Substrate is bound by residues 40–44 (FIIVH) and Arg111. Residue His297 participates in heme binding. Thr311 serves as a coordination point for substrate.

It belongs to the tryptophan 2,3-dioxygenase family. Homotetramer. Requires heme as cofactor.

The catalysed reaction is L-tryptophan + O2 = N-formyl-L-kynurenine. It participates in amino-acid degradation; L-tryptophan degradation via kynurenine pathway; L-kynurenine from L-tryptophan: step 1/2. Heme-dependent dioxygenase that catalyzes the oxidative cleavage of the L-tryptophan (L-Trp) pyrrole ring and converts L-tryptophan to N-formyl-L-kynurenine. Catalyzes the oxidative cleavage of the indole moiety. The polypeptide is Tryptophan 2,3-dioxygenase (Alteromonas mediterranea (strain DSM 17117 / CIP 110805 / LMG 28347 / Deep ecotype)).